Consider the following 261-residue polypeptide: Kallikrein-1 (261 aa).

The signal sequence occupies residues 1 to 18 (MRFLILFLALSLGGIDAA). A propeptide spans 19–24 (PPVQSR) (activation peptide). Positions 25-258 (IVGGFNCEKN…FNTWIRETMA (234 aa)) constitute a Peptidase S1 domain. Cystine bridges form between Cys-31–Cys-173, Cys-50–Cys-66, Cys-152–Cys-219, Cys-184–Cys-198, and Cys-209–Cys-234. The active-site Charge relay system is His-65. The N-linked (GlcNAc...) asparagine glycan is linked to Asn-102. Asp-120 functions as the Charge relay system in the catalytic mechanism. The active-site Charge relay system is Ser-213.

Belongs to the peptidase S1 family. Kallikrein subfamily.

The enzyme catalyses Preferential cleavage of Arg-|-Xaa bonds in small molecule substrates. Highly selective action to release kallidin (lysyl-bradykinin) from kininogen involves hydrolysis of Met-|-Xaa or Leu-|-Xaa.. Its function is as follows. Glandular kallikreins cleave Met-Lys and Arg-Ser bonds in kininogen to release Lys-bradykinin. In Mus musculus (Mouse), this protein is Kallikrein-1 (Klk1).